Consider the following 487-residue polypeptide: Probable aspartic-type endopeptidase opsB (487 aa).

The first 20 residues, 1-20, serve as a signal peptide directing secretion; that stretch reads MQKSWLVLLVACLGLQGTTA. The region spanning 69–398 is the Peptidase A1 domain; sequence YFCNITLGTP…DLSNNEISLA (330 aa). N-linked (GlcNAc...) asparagine glycosylation is present at Asn72. The active site involves Asp87. N-linked (GlcNAc...) asparagine glycans are attached at residues Asn99, Asn111, Asn132, and Asn272. Asp286 is an active-site residue. N-linked (GlcNAc...) asparagine glycosylation is found at Asn329 and Asn403. Ala463 carries the GPI-anchor amidated alanine lipid modification. Residues 464–487 constitute a propeptide, removed in mature form; it reads PAGPTDVPKHLVLGAAAIGYVLAF.

Belongs to the peptidase A1 family.

It localises to the cell membrane. Functionally, probable GPI-anchored aspartic-type endopeptidase. The protein is Probable aspartic-type endopeptidase opsB (opsB) of Aspergillus oryzae (strain ATCC 42149 / RIB 40) (Yellow koji mold).